Reading from the N-terminus, the 249-residue chain is Segregation and condensation protein A (249 aa).

It belongs to the ScpA family. In terms of assembly, component of a cohesin-like complex composed of ScpA, ScpB and the Smc homodimer, in which ScpA and ScpB bind to the head domain of Smc. The presence of the three proteins is required for the association of the complex with DNA.

It localises to the cytoplasm. Functionally, participates in chromosomal partition during cell division. May act via the formation of a condensin-like complex containing Smc and ScpB that pull DNA away from mid-cell into both cell halves. This chain is Segregation and condensation protein A, found in Listeria innocua serovar 6a (strain ATCC BAA-680 / CLIP 11262).